We begin with the raw amino-acid sequence, 322 residues long: NADH-quinone oxidoreductase subunit H (322 aa).

8 consecutive transmembrane segments (helical) span residues 14 to 34, 81 to 101, 114 to 134, 149 to 169, 186 to 206, 237 to 257, 265 to 285, and 302 to 322; these read IFMH…YMSF, YIFV…IPVI, VGVL…LLAG, SIAQ…GIVA, LWNI…GMAL, FFIS…TLFF, FPPV…FVLI, and WKFL…YILI.

The protein belongs to the complex I subunit 1 family. NDH-1 is composed of 13 different subunits. Subunits NuoA, H, J, K, L, M, N constitute the membrane sector of the complex.

The protein localises to the cell inner membrane. It catalyses the reaction a quinone + NADH + 5 H(+)(in) = a quinol + NAD(+) + 4 H(+)(out). In terms of biological role, NDH-1 shuttles electrons from NADH, via FMN and iron-sulfur (Fe-S) centers, to quinones in the respiratory chain. The immediate electron acceptor for the enzyme in this species is believed to be ubiquinone. Couples the redox reaction to proton translocation (for every two electrons transferred, four hydrogen ions are translocated across the cytoplasmic membrane), and thus conserves the redox energy in a proton gradient. This subunit may bind ubiquinone. The polypeptide is NADH-quinone oxidoreductase subunit H (Blochmanniella floridana).